Consider the following 376-residue polypeptide: Cytochrome b (376 aa).

Helical transmembrane passes span 28–48 (YGFL…FLAS), 72–94 (WCFR…LHIL), 107–127 (SWIS…IGYV), and 169–189 (FFVL…IHIF). His78 and His92 together coordinate heme b. Heme b contacts are provided by His173 and His187. His192 contributes to the a ubiquinone binding site. Helical transmembrane passes span 214–234 (LLSL…IQSI), 274–294 (IPSK…LFLL), 317–337 (VPII…CQLP), and 340–360 (IFIL…LFAL).

It belongs to the cytochrome b family. The main subunits of complex b-c1 are: cytochrome b, cytochrome c1 and the Rieske protein. It depends on heme b as a cofactor.

The protein localises to the mitochondrion inner membrane. Functionally, component of the ubiquinol-cytochrome c reductase complex (complex III or cytochrome b-c1 complex) that is part of the mitochondrial respiratory chain. The b-c1 complex mediates electron transfer from ubiquinol to cytochrome c. Contributes to the generation of a proton gradient across the mitochondrial membrane that is then used for ATP synthesis. This Plasmodium chabaudi protein is Cytochrome b (MT-CYB).